The following is a 64-amino-acid chain: MGKTSGAKQATVVVAAMALGWLAIEIAFKPFLDKFRSSIDKSDPTKDPDDFDTAATATTSKEGL.

The Chloroplast intermembrane portion of the chain corresponds to 1 to 11; it reads MGKTSGAKQAT. The helical transmembrane segment at 12-32 threads the bilayer; it reads VVVAAMALGWLAIEIAFKPFL. Positions 29–35 match the AKR2A-binding sequence (ABS) required for chloroplast outer envelope membrane targeting motif; that stretch reads KPFLDKF. Residues 33-64 are Cytoplasmic-facing; sequence DKFRSSIDKSDPTKDPDDFDTAATATTSKEGL. Basic and acidic residues predominate over residues 39–48; sequence IDKSDPTKDP. Residues 39 to 64 form a disordered region; the sequence is IDKSDPTKDPDDFDTAATATTSKEGL. The segment covering 53–64 has biased composition (low complexity); that stretch reads TAATATTSKEGL.

Interacts with AKR2A. In terms of tissue distribution, confined to green tissues.

The protein localises to the plastid. The protein resides in the chloroplast outer membrane. This chain is Outer envelope membrane protein 7, found in Arabidopsis thaliana (Mouse-ear cress).